Consider the following 174-residue polypeptide: Ly6/PLAUR domain-containing protein 6 (174 aa).

A signal peptide spans 1–22 (MEPWPLMAWGLMLTAITGWIKA). One can recognise a UPAR/Ly6 domain in the interval 47–141 (FKCFTCEDAP…PRNETDAIFS (95 aa)). 6 cysteine pairs are disulfide-bonded: C49–C77, C52–C61, C70–C96, C102–C121, C107–C118, and C122–C127. 2 N-linked (GlcNAc...) asparagine glycosylation sites follow: N134 and N147. Residue S149 is the site of GPI-anchor amidated serine attachment. A propeptide spans 150-174 (AQSTQTLPLLLLSVSITSLMLHSIN) (removed in mature form).

In terms of assembly, interacts with fzd8 and lrp6.

It localises to the cell membrane. Its subcellular location is the membrane raft. Acts as an important regulator of embryogenesis through its enhancement of Wnt/beta-catenin signaling. Positively regulates Wnt/beta-catenin signaling by ensuring phosphorylation of lrp6 specifically in plasma membrane rafts and its subsequent internalization into signaling-competent vesicles. Essential for the wnt8-mediated patterning of the mesoderm and neuroectoderm during gastrulation. In Danio rerio (Zebrafish), this protein is Ly6/PLAUR domain-containing protein 6 (lypd6).